Consider the following 118-residue polypeptide: UPF0102 protein Nwi_0116 (118 aa).

The protein belongs to the UPF0102 family.

In Nitrobacter winogradskyi (strain ATCC 25391 / DSM 10237 / CIP 104748 / NCIMB 11846 / Nb-255), this protein is UPF0102 protein Nwi_0116.